A 235-amino-acid polypeptide reads, in one-letter code: Thymidylate kinase (235 aa).

10-17 (GINGVEKS) is a binding site for ATP.

Belongs to the thymidylate kinase family.

It carries out the reaction dTMP + ATP = dTDP + ADP. It functions in the pathway pyrimidine metabolism; dTTP biosynthesis. In terms of biological role, catalyzes the conversion of dTMP to dTDP. This is Thymidylate kinase (TMK) from African swine fever virus (isolate Pig/Kenya/KEN-50/1950) (ASFV).